The following is a 198-amino-acid chain: Ribonuclease HII (198 aa).

The region spanning 6 to 195 is the RNase H type-2 domain; sequence RRVAGVDEVG…VHHMLYQDKN (190 aa). Asp12, Glu13, and Asp103 together coordinate a divalent metal cation.

Belongs to the RNase HII family. It depends on Mn(2+) as a cofactor. Mg(2+) serves as cofactor.

The protein resides in the cytoplasm. It catalyses the reaction Endonucleolytic cleavage to 5'-phosphomonoester.. In terms of biological role, endonuclease that specifically degrades the RNA of RNA-DNA hybrids. The sequence is that of Ribonuclease HII from Roseobacter denitrificans (strain ATCC 33942 / OCh 114) (Erythrobacter sp. (strain OCh 114)).